Consider the following 522-residue polypeptide: Zinc finger protein STOP1 homolog (522 aa).

Polar residues-rich tracts occupy residues 1–12 (MDSGLGRSSETS) and 19–40 (MASNATRNTDPDQQGVRFSSMD). Disordered regions lie at residues 1 to 43 (MDSG…DQPP) and 234 to 260 (CGGEGSEPIPMEDHDVKESDDGGEREN). Basic and acidic residues predominate over residues 244-260 (MEDHDVKESDDGGEREN). Residues 282 to 304 (HFCLICGKGFKRDANLRMHMRGH) form a C2H2-type 1 zinc finger. The C2H2-type 2; atypical zinc-finger motif lies at 390 to 421 (KHCGRDKWLCSCGTTFSRKDKLFGHVALFQGH).

The protein resides in the nucleus. In terms of biological role, probable transcription factor that may be involved in aluminum tolerance. This chain is Zinc finger protein STOP1 homolog, found in Oryza sativa subsp. japonica (Rice).